We begin with the raw amino-acid sequence, 101 residues long: Immunity protein CdiI-2 (101 aa).

As to quaternary structure, specifically interacts with the truncated CT fragment of cognate toxin protein CdiA-2, which inhibits CdiA-2 tRNA nuclease activity.

Functionally, immunity protein component of a toxin-immunity protein module, which functions as a cellular contact-dependent growth inhibition (CDI) system. CDI modules allow bacteria to communicate with and inhibit the growth of closely related neighboring bacteria in a contact-dependent fashion. Neutralizes the toxic activity of cognate toxin CdiA (C-terminal 301 residue CT fragment) upon expression in E.coli. Does not inhibit toxic activity of CdiA from other strains of B.pseudomallei. Expression of this cdiAIB locus in B.thailandensis confers protection against other bacteria carrying the locus; growth inhibition requires cellular contact. This Burkholderia pseudomallei (strain 1026b) protein is Immunity protein CdiI-2 (cdiI2).